The primary structure comprises 103 residues: Large ribosomal subunit protein bL21 (103 aa).

It belongs to the bacterial ribosomal protein bL21 family. As to quaternary structure, part of the 50S ribosomal subunit. Contacts protein L20.

In terms of biological role, this protein binds to 23S rRNA in the presence of protein L20. The sequence is that of Large ribosomal subunit protein bL21 from Wolinella succinogenes (strain ATCC 29543 / DSM 1740 / CCUG 13145 / JCM 31913 / LMG 7466 / NCTC 11488 / FDC 602W) (Vibrio succinogenes).